We begin with the raw amino-acid sequence, 208 residues long: MPPKKDVPVKKPAGPSISKPAAKPAAAGAPPAKTKAEPAVPQAPQKTQEPPVDLSKVVIEFNKDQLEEFKEAFELFDRVGDGKILYSQCGDVMRALGQNPTNAEVLKVLGNPKSDELKSRRVDFETFLPMLQAVAKNRGQGTYEDYLEGFRVFDKEGNGKVMGAELRHVLTTLGEKMTEEEVETVLAGHEDSNGCINYEAFLKHILSV.

The segment at 1-51 (MPPKKDVPVKKPAGPSISKPAAKPAAAGAPPAKTKAEPAVPQAPQKTQEPP) is disordered. Over residues 10 to 40 (KKPAGPSISKPAAKPAAAGAPPAKTKAEPAV) the composition is skewed to low complexity. EF-hand domains lie at 64-99 (DQLE…LGQN), 141-176 (GTYE…LGEK), and 176-208 (KMTE…ILSV).

Myosin is a hexamer of 2 heavy chains and 4 light chains.

Its function is as follows. Regulatory light chain of myosin. Does not bind calcium. The chain is Myosin light chain 6B (MYL6B) from Homo sapiens (Human).